The sequence spans 435 residues: Nucleoredoxin (435 aa).

S2 is subject to N-acetylserine. The Thioredoxin domain occupies 167–314 (PKPFREVIAG…FPWHPKPVLE (148 aa)).

It belongs to the nucleoredoxin family. As to quaternary structure, associates with the phosphatase 2A holoenzyme. Interacts with PPP2CA; the interaction is direct. Interacts with DVL1 (via PDZ domain); the interaction is direct and regulated by oxidative stress. Widely expressed with higher expression in testis and skin.

Its subcellular location is the cytoplasm. It is found in the cytosol. It localises to the nucleus. The catalysed reaction is [protein]-dithiol + NAD(+) = [protein]-disulfide + NADH + H(+). It carries out the reaction [protein]-dithiol + NADP(+) = [protein]-disulfide + NADPH + H(+). In terms of biological role, functions as a redox-dependent negative regulator of the Wnt signaling pathway, possibly by preventing ubiquitination of DVL3 by the BCR(KLHL12) complex. May also function as a transcriptional regulator act as a regulator of protein phosphatase 2A (PP2A). The polypeptide is Nucleoredoxin (Nxn) (Mus musculus (Mouse)).